Consider the following 193-residue polypeptide: MAAEQVEDNCISFVEMKFINNTLYFVAENDEDLESDHFGKLEPKLSIIRNLNDQVLFINQGNQPVFEDMPDSDCPDNAPQTIFIIYMYKDSLTRGLAVTISVQCKKMSTLSCENKIVSFKEMNPPDNIDNEGSDIIFFQRSVPGHDDKIQFESSLYKGYFLACKKENDLFKLILKKQDDNGDKSVTFTVQNQH.

The propeptide occupies 1 to 36 (MAAEQVEDNCISFVEMKFINNTLYFVAENDEDLESD).

This sequence belongs to the IL-1 family. As to quaternary structure, forms a ternary complex with ligand-binding receptor subunit IL18R1 and signaling receptor subunit IL18RAP at the plasma membrane. Mature IL18 first binds to IL18R1 forming a low affinity binary complex, which then interacts with IL18RAP to form a high affinity ternary complex that signals inside the cell. Interacts with cargo receptor TMED10; the interaction mediates the translocation from the cytoplasm into the ERGIC (endoplasmic reticulum-Golgi intermediate compartment) and thereby secretion. The pro-IL-18 precursor is processed by CASP1, CASP4 or CASP5 to yield its mature, active form. The pro-IL-18 precursor features autoinhibitory interactions between the propeptide and the post-cleavage-site region, preventing recognition by the IL18R1 receptor. Processing by CASP1, CASP4 or CASP5 induces conformational changes to generate critical receptor-binding sites. The mature form is then secreted and released in the extracellular milieu by passing through the gasdermin-D (GSDMD) pore. In contrast, cleavage by CASP3 inactivates IL18.

It localises to the cytoplasm. Its subcellular location is the cytosol. It is found in the secreted. Its function is as follows. Pro-inflammatory cytokine primarily involved in epithelial barrier repair, polarized T-helper 1 (Th1) cell and natural killer (NK) cell immune responses. Upon binding to IL18R1 and IL18RAP, forms a signaling ternary complex which activates NF-kappa-B, triggering synthesis of inflammatory mediators. Synergizes with IL12/interleukin-12 to induce IFNG synthesis from T-helper 1 (Th1) cells and natural killer (NK) cells. Involved in transduction of inflammation downstream of pyroptosis: its mature form is specifically released in the extracellular milieu by passing through the gasdermin-D (GSDMD) pore. The chain is Interleukin-18 (IL18) from Boselaphus tragocamelus (Nilgai).